The chain runs to 340 residues: L-threonine 3-dehydrogenase (340 aa).

C38 contacts Zn(2+). Active-site charge relay system residues include T40 and H43. Residues H63, E64, C93, C96, C99, and C107 each contribute to the Zn(2+) site. NAD(+)-binding positions include I175, D195, R200, 261–263 (LGI), and 285–286 (IY).

This sequence belongs to the zinc-containing alcohol dehydrogenase family. In terms of assembly, homotetramer. It depends on Zn(2+) as a cofactor.

Its subcellular location is the cytoplasm. The catalysed reaction is L-threonine + NAD(+) = (2S)-2-amino-3-oxobutanoate + NADH + H(+). Its pathway is amino-acid degradation; L-threonine degradation via oxydo-reductase pathway; glycine from L-threonine: step 1/2. Catalyzes the NAD(+)-dependent oxidation of L-threonine to 2-amino-3-ketobutyrate. This Stenotrophomonas maltophilia (strain K279a) protein is L-threonine 3-dehydrogenase.